A 222-amino-acid polypeptide reads, in one-letter code: MVLLSKFDFSGKELGKFELPDAFFTEGREQSVKDYLVAIQANKRQWSACTRGRSEVSHSTKKPFRQKGTGNARQGCLAAPQFRGGGIVFGPKPKFDQHIRINKKERRAAIRLLLAQKIQTGKLIVAENSVFVSSLDAPKTKEALRFLKECNVECRGVLFVDSLAHVGSNENLRLSVRNLSAVRGFTYGENISGYDIAAARNIVVSEKALELLVESLVSTTKD.

It belongs to the universal ribosomal protein uL4 family. Part of the 50S ribosomal subunit.

Functionally, one of the primary rRNA binding proteins, this protein initially binds near the 5'-end of the 23S rRNA. It is important during the early stages of 50S assembly. It makes multiple contacts with different domains of the 23S rRNA in the assembled 50S subunit and ribosome. Forms part of the polypeptide exit tunnel. This chain is Large ribosomal subunit protein uL4, found in Chlamydia trachomatis serovar L2 (strain ATCC VR-902B / DSM 19102 / 434/Bu).